The following is a 126-amino-acid chain: MAARGAMLRYLRVNVNPTIQNPRECVLPFSILLRRFSEEVRGSFLDKSEVTDRVLSVVKNFQKVDPSKVTPKANFQNDLGLDSLDSVEVVMALEEEFGFEIPDNEADKIQSIDLAVDFIASHPQAK.

The transit peptide at 1–36 (MAARGAMLRYLRVNVNPTIQNPRECVLPFSILLRRF) directs the protein to the mitochondrion. The 76-residue stretch at 48-123 (SEVTDRVLSV…LAVDFIASHP (76 aa)) folds into the Carrier domain. S83 is modified (O-(pantetheine 4'-phosphoryl)serine).

This sequence belongs to the acyl carrier protein (ACP) family. As to quaternary structure, complex I is composed of at least 49 different subunits. 4'-phosphopantetheine is transferred from CoA to a specific serine of the apo-ACP-like protein.

It localises to the mitochondrion. Its pathway is lipid metabolism; fatty acid biosynthesis. Functionally, carrier of the growing fatty acid chain in fatty acid biosynthesis. May be involved in the synthesis of short and medium chain fatty acids. Accessory and non-catalytic subunit of the mitochondrial membrane respiratory chain NADH dehydrogenase (Complex I), which functions in the transfer of electrons from NADH to the respiratory chain. In Arabidopsis thaliana (Mouse-ear cress), this protein is Acyl carrier protein 2, mitochondrial (MTACP2).